Consider the following 654-residue polypeptide: Integrator complex subunit 9 (654 aa).

1D-myo-inositol hexakisphosphate is bound by residues Met1, Arg2, Thr18, Phe19, Arg504, Lys508, and Arg509.

This sequence belongs to the metallo-beta-lactamase superfamily. RNA-metabolizing metallo-beta-lactamase-like family. INTS9 subfamily. As to quaternary structure, belongs to the multiprotein complex Integrator, at least composed of IntS1, IntS2, IntS3, IntS4, omd/IntS5, IntS6, defl/IntS7, IntS8, IntS9, IntS10, IntS11, IntS12, asun/IntS13, IntS14 and IntS15. The core complex associates with protein phosphatase 2A subunits mts/PP2A and Pp2A-29B, to form the Integrator-PP2A (INTAC) complex. Within the complex, interacts with IntS1 and IntS12. IntS9 is part of the RNA endonuclease subcomplex, composed of IntS4, IntS9, IntS11 and inositol hexakisphosphate (InsP6).

It localises to the nucleus. It is found in the cytoplasm. The protein localises to the cytosol. Component of the integrator complex, a multiprotein complex that terminates RNA polymerase II (Pol II) transcription in the promoter-proximal region of genes. The integrator complex provides a quality checkpoint during transcription elongation by driving premature transcription termination of transcripts that are unfavorably configured for transcriptional elongation: the complex terminates transcription by (1) catalyzing dephosphorylation of the C-terminal domain (CTD) of Pol II subunit Polr2A/Rbp1 and Spt5, and (2) degrading the exiting nascent RNA transcript via endonuclease activity. The integrator complex is also involved in the 3'-end processing of the U7 snRNA, and also the spliceosomal snRNAs U1, U2, U4 and U5. The sequence is that of Integrator complex subunit 9 from Drosophila melanogaster (Fruit fly).